A 385-amino-acid chain; its full sequence is MDVREAMKNQTHVAMILSGHVLSSAPKDSNVIFSPASINSAITMHAAGPGGDLVSGQILSFLRSSSIDELKTVFRELASVVYADRSATGGPKITAANGLWIDKSLPTDPKFKDLFENFFKAVYVPVDFRSEAEEVRKEVNSWVEHHTNNLIKDLLPDGSVTSLTNKIYANALSFKGAWKRPFEKYYTRDNDFYLVNGTSVSVPFMSSYENQYVRAYDGFKVLRLPYQRGSDDTNRKFSMYFYLPDKKDGLDDLLEKMASTPGFLDSHIPTYRDELEKFRIPKFKIEFGFSVTSVLDRLGLRSMSMYHKACVEIDEEGAEAAAATADGDCGCSLDFVEPPKKIDFVADHPFLFLIREEKTGTVLFVGQIFDPSGPCSGSNSDSDDY.

An RCL region spans residues 317-341 (GAEAAAATADGDCGCSLDFVEPPKK).

This sequence belongs to the serpin family.

In terms of biological role, probable serine protease inhibitor. The protein is Serpin-Z1 of Arabidopsis thaliana (Mouse-ear cress).